The following is a 225-amino-acid chain: Urease accessory protein UreG (225 aa).

A GTP-binding site is contributed by G25–T32.

The protein belongs to the SIMIBI class G3E GTPase family. UreG subfamily. Homodimer. UreD, UreF and UreG form a complex that acts as a GTP-hydrolysis-dependent molecular chaperone, activating the urease apoprotein by helping to assemble the nickel containing metallocenter of UreC. The UreE protein probably delivers the nickel.

It is found in the cytoplasm. Its function is as follows. Facilitates the functional incorporation of the urease nickel metallocenter. This process requires GTP hydrolysis, probably effectuated by UreG. The chain is Urease accessory protein UreG from Haemophilus influenzae (strain ATCC 51907 / DSM 11121 / KW20 / Rd).